A 454-amino-acid chain; its full sequence is Bifunctional protein GlmU (454 aa).

The tract at residues 1–226 (MSLEIVILAA…AMEVQGVNDR (226 aa)) is pyrophosphorylase. UDP-N-acetyl-alpha-D-glucosamine-binding positions include 8-11 (LAAG), Lys-22, Gln-73, 78-79 (GT), 99-101 (YGD), Gly-136, Glu-151, Asn-166, and Asn-224. Asp-101 contacts Mg(2+). Position 224 (Asn-224) interacts with Mg(2+). The segment at 227 to 247 (MQQAQLERHYQRLRAEELMRQ) is linker. The segment at 248 to 454 (GVTLLDPQRL…NWKRPEKIRK (207 aa)) is N-acetyltransferase. UDP-N-acetyl-alpha-D-glucosamine-binding residues include Arg-330 and Lys-348. Residue His-360 is the Proton acceptor of the active site. UDP-N-acetyl-alpha-D-glucosamine is bound by residues Tyr-363 and Asn-374. Acetyl-CoA-binding positions include Ala-377, 383 to 384 (NY), Ser-402, Ala-420, and Arg-437.

The protein in the N-terminal section; belongs to the N-acetylglucosamine-1-phosphate uridyltransferase family. This sequence in the C-terminal section; belongs to the transferase hexapeptide repeat family. Homotrimer. Mg(2+) is required as a cofactor.

Its subcellular location is the cytoplasm. The catalysed reaction is alpha-D-glucosamine 1-phosphate + acetyl-CoA = N-acetyl-alpha-D-glucosamine 1-phosphate + CoA + H(+). It carries out the reaction N-acetyl-alpha-D-glucosamine 1-phosphate + UTP + H(+) = UDP-N-acetyl-alpha-D-glucosamine + diphosphate. The protein operates within nucleotide-sugar biosynthesis; UDP-N-acetyl-alpha-D-glucosamine biosynthesis; N-acetyl-alpha-D-glucosamine 1-phosphate from alpha-D-glucosamine 6-phosphate (route II): step 2/2. It participates in nucleotide-sugar biosynthesis; UDP-N-acetyl-alpha-D-glucosamine biosynthesis; UDP-N-acetyl-alpha-D-glucosamine from N-acetyl-alpha-D-glucosamine 1-phosphate: step 1/1. Its pathway is bacterial outer membrane biogenesis; LPS lipid A biosynthesis. Its function is as follows. Catalyzes the last two sequential reactions in the de novo biosynthetic pathway for UDP-N-acetylglucosamine (UDP-GlcNAc). The C-terminal domain catalyzes the transfer of acetyl group from acetyl coenzyme A to glucosamine-1-phosphate (GlcN-1-P) to produce N-acetylglucosamine-1-phosphate (GlcNAc-1-P), which is converted into UDP-GlcNAc by the transfer of uridine 5-monophosphate (from uridine 5-triphosphate), a reaction catalyzed by the N-terminal domain. This chain is Bifunctional protein GlmU, found in Pseudomonas paraeruginosa (strain DSM 24068 / PA7) (Pseudomonas aeruginosa (strain PA7)).